We begin with the raw amino-acid sequence, 347 residues long: Isocitrate dehydrogenase [NAD] subunit alpha, mitochondrial (347 aa).

Residues 1-8 (QKQVTRGF) constitute a mitochondrion transit peptide. 14-42 (TVTLIPGDGIGPEISAAVMKIFDAAKAPI) lines the NAD(+) pocket. At Lys58 the chain carries N6-succinyllysine. Thr82 carries the phosphothreonine modification. Substrate is bound by residues Arg96, Arg106, and Arg127. Residue Lys204 is modified to N6-acetyllysine. Residues Asp214, Asp238, and Asp242 each coordinate Mg(2+). Lys324 carries the N6-acetyllysine; alternate modification. Lys324 bears the N6-succinyllysine; alternate mark. At Lys331 the chain carries N6-succinyllysine.

This sequence belongs to the isocitrate and isopropylmalate dehydrogenases family. As to quaternary structure, heterooligomer of subunits alpha (IDH3A), beta (IDH3B), and gamma (IDH3G) in the apparent ratio of 2:1:1. The heterodimer containing one IDH3A and one IDH3B subunit and the heterodimer containing one IDH3A and one IDH3G subunit assemble into a heterotetramer (which contains two subunits of IDH3A, one of IDH3B and one of IDH3G) and further into the heterooctamer. The cofactor is Mg(2+). Requires Mn(2+) as cofactor.

It is found in the mitochondrion. The catalysed reaction is D-threo-isocitrate + NAD(+) = 2-oxoglutarate + CO2 + NADH. Its activity is regulated as follows. The heterotetramer and the heterodimer composed of IDH3A and IDH3G subunits can be allosterically activated by citrate (CIT) or/and ADP, and the two activators can act independently or synergistically. The heterodimer composed of IDH3A and IDH3B subunits cannot be allosterically regulated and the allosteric regulation of the heterotetramer is through the IDH3G subunit and not the IDH3B subunit. The IDH3G subunit contains the allosteric site which consists of a CIT-binding site and an ADP-binding site, and the binding of CIT and ADP causes conformational changes at the allosteric site which are transmitted to the active site in the catalytic subunit (IDH3A) through a cascade of conformational changes at the heterodimer interface, leading to stabilization of the isocitrate-binding at the active site and thus activation of the enzyme. ATP can activate the heterotetramer and the heterodimer composed of IDH3A and IDH3G subunits at low concentrations but inhibits their activities at high concentrations, whereas ATP exhibits only inhibitory effect on the heterodimer composed of IDH3A and IDH3B subunits. Its function is as follows. Catalytic subunit of the enzyme which catalyzes the decarboxylation of isocitrate (ICT) into alpha-ketoglutarate. The heterodimer composed of the alpha (IDH3A) and beta (IDH3B) subunits and the heterodimer composed of the alpha (IDH3A) and gamma (IDH3G) subunits, have considerable basal activity but the full activity of the heterotetramer (containing two subunits of IDH3A, one of IDH3B and one of IDH3G) requires the assembly and cooperative function of both heterodimers. The polypeptide is Isocitrate dehydrogenase [NAD] subunit alpha, mitochondrial (IDH3A) (Macaca fascicularis (Crab-eating macaque)).